A 245-amino-acid polypeptide reads, in one-letter code: MGQKTHPYGFRLGITKDWKSHWYAERSDYSSLLHEDWAIRNYIKKNYYQAGISLIEIERKAANRVDITIHTARPGMLIGRGGSEIENIRKNLVKLTNKSVFVNVQEVKNPELDAQLVAENIATQIEKRINYKRAMKQAINRALRAGAKGVKVMCSGRLNGAEIARSEWFREGRIPLQTLTADIDYGFAEAFTISGVIGVKVWIYKGDVPELHKEPIQELPEKAVPKKIEDEDLYEKDEVNYDVDA.

Residues 39-108 (IRNYIKKNYY…SVFVNVQEVK (70 aa)) form the KH type-2 domain.

This sequence belongs to the universal ribosomal protein uS3 family. Part of the 30S ribosomal subunit. Forms a tight complex with proteins S10 and S14.

Functionally, binds the lower part of the 30S subunit head. Binds mRNA in the 70S ribosome, positioning it for translation. The sequence is that of Small ribosomal subunit protein uS3 from Dictyoglomus turgidum (strain DSM 6724 / Z-1310).